The primary structure comprises 139 residues: ATP synthase epsilon chain (139 aa).

The protein belongs to the ATPase epsilon chain family. F-type ATPases have 2 components, CF(1) - the catalytic core - and CF(0) - the membrane proton channel. CF(1) has five subunits: alpha(3), beta(3), gamma(1), delta(1), epsilon(1). CF(0) has three main subunits: a, b and c.

It is found in the cell membrane. Its function is as follows. Produces ATP from ADP in the presence of a proton gradient across the membrane. This chain is ATP synthase epsilon chain, found in Roseiflexus sp. (strain RS-1).